A 341-amino-acid chain; its full sequence is Gibberellin 2-beta-dioxygenase 2 (341 aa).

In terms of domain architecture, Fe2OG dioxygenase spans K179–P283. Fe cation is bound by residues H207, D209, and H264. R274 is an active-site residue. Residue R274 participates in 2-oxoglutarate binding.

It belongs to the iron/ascorbate-dependent oxidoreductase family. GA2OX subfamily. The cofactor is Fe(2+). As to expression, preferentially expressed in flowers, siliques, and upper stems. Expressed in cotyledons, at the base of the shoot apical meristem and developing leaf primordia.

The enzyme catalyses gibberellin A1 + 2-oxoglutarate + O2 = gibberellin A8 + succinate + CO2. It functions in the pathway plant hormone biosynthesis; gibberellin biosynthesis. Its function is as follows. Catalyzes the 2-beta-hydroxylation of several biologically active gibberellins, leading to the homeostatic regulation of their endogenous level. Catabolism of gibberellins (GAs) plays a central role in plant development. Converts GA9/GA20 to GA51/GA29 and GA4/GA1 to GA34/GA8. The chain is Gibberellin 2-beta-dioxygenase 2 (GA2OX2) from Arabidopsis thaliana (Mouse-ear cress).